Here is a 140-residue protein sequence, read N- to C-terminus: ISDra2 transposase TnpA (140 aa).

Residues H67 and H69 each coordinate Mg(2+). Positions 127 to 133 (AQIQKYI) are mobile alpha helix. Y132 acts as the Nucleophile in catalysis. Mg(2+) is bound at residue Q136.

The protein belongs to the transposase 17 family. Homodimer. It depends on Mg(2+) as a cofactor.

Both the excision and insertion steps are inhibited by TnpB. A transposase that is part of insertion sequence (IS) element ISDra2, it is necessary and sufficient for both transposon excision and insertion of ISDra2. This protein alone can be provided in trans and allows transposition of an empty IS element (tnpA or tnpA-tnpB replaced by a selectable marker). ISDra2 binds subterminal imperfect palindromes at the left (LE) and right (RE) ends of the element and cleaves only the 'top strand' which is circularized and subsequently reinserted into the DNA target. This is called a 'peel and paste' mechanism and increases the copy number of the IS. Transposition is linked to DNA replication in the absence of irradiation, with maximal activity when the 'top strand' is on the replication lagging strand, and occurs preferentially on the lagging strand. The IS element inserts 3' of the target sequence 5'-TTGAT-3'; target duplication has not been observed. The sequence is that of ISDra2 transposase TnpA from Deinococcus radiodurans (strain ATCC 13939 / DSM 20539 / JCM 16871 / CCUG 27074 / LMG 4051 / NBRC 15346 / NCIMB 9279 / VKM B-1422 / R1).